Here is a 204-residue protein sequence, read N- to C-terminus: MKVKICGITDMETAKRACEYGADALGFVFAESKRKITPGLAKEIIQELPANVLKIGVFVNESVEVIQKITENCGLTHVQLHGDEDNHQIRRLNIPSIKALGVTSEIDMKNAQAYKTDYILFDSPKERFYGGNGKKFSWELLAHMSKKLREKTILAGGLNALNIEEAIRTVRPYMVDVSSGVETEGKKDVEKIKQFIIKAKECSK.

It belongs to the TrpF family.

It carries out the reaction N-(5-phospho-beta-D-ribosyl)anthranilate = 1-(2-carboxyphenylamino)-1-deoxy-D-ribulose 5-phosphate. Its pathway is amino-acid biosynthesis; L-tryptophan biosynthesis; L-tryptophan from chorismate: step 3/5. The protein is N-(5'-phosphoribosyl)anthranilate isomerase of Bacillus cereus (strain AH187).